The chain runs to 354 residues: Dual-specificity RNA methyltransferase RlmN (354 aa).

The active-site Proton acceptor is Glu86. Residues Arg105–Asp338 enclose the Radical SAM core domain. An intrachain disulfide couples Cys112 to Cys343. [4Fe-4S] cluster contacts are provided by Cys119, Cys123, and Cys126. Residues Gly169–Glu170, Ser201, Ser224–His226, and Asn300 contribute to the S-adenosyl-L-methionine site. The active-site S-methylcysteine intermediate is the Cys343.

This sequence belongs to the radical SAM superfamily. RlmN family. It depends on [4Fe-4S] cluster as a cofactor.

It is found in the cytoplasm. It catalyses the reaction adenosine(2503) in 23S rRNA + 2 reduced [2Fe-2S]-[ferredoxin] + 2 S-adenosyl-L-methionine = 2-methyladenosine(2503) in 23S rRNA + 5'-deoxyadenosine + L-methionine + 2 oxidized [2Fe-2S]-[ferredoxin] + S-adenosyl-L-homocysteine. The enzyme catalyses adenosine(37) in tRNA + 2 reduced [2Fe-2S]-[ferredoxin] + 2 S-adenosyl-L-methionine = 2-methyladenosine(37) in tRNA + 5'-deoxyadenosine + L-methionine + 2 oxidized [2Fe-2S]-[ferredoxin] + S-adenosyl-L-homocysteine. In terms of biological role, specifically methylates position 2 of adenine 2503 in 23S rRNA and position 2 of adenine 37 in tRNAs. m2A2503 modification seems to play a crucial role in the proofreading step occurring at the peptidyl transferase center and thus would serve to optimize ribosomal fidelity. This chain is Dual-specificity RNA methyltransferase RlmN, found in Campylobacter fetus subsp. fetus (strain 82-40).